Consider the following 750-residue polypeptide: ABC transporter D family member 3 (750 aa).

Polar residues predominate over residues 1–14; it reads MKKNNVNNITETLN. The segment at 1 to 32 is disordered; the sequence is MKKNNVNNITETLNSSSSSSSSSGSSSDEEVK. Low complexity predominate over residues 15–26; sequence SSSSSSSSSGSS. Helical transmembrane passes span 63 to 83, 123 to 143, 188 to 208, and 215 to 235; these read IVIILYEKPVIPLLLFLLLFG, FAIGGSALFDAIIKFIVSIMA, FTTLLSSIVSQCITGPMVVVY, and TTIDWYAPLIVYGYFFLGYFI. An ABC transmembrane type-1 domain is found at 74–362; that stretch reads PLLLFLLLFG…EQAKQQFEAL (289 aa). Residues 334 to 370 are a coiled coil; that stretch reads ALLKRSNKNIKNEELLVEEEQAKQQFEALLKNKKRVI. Residues 382-402 form a helical membrane-spanning segment; the sequence is MFTFFSPLINYFIISIPVFFL. The ABC transporter domain maps to 507-737; the sequence is ITLDDVTYFT…SNNINTINID (231 aa). ATP is bound at residue 540–547; the sequence is GPSGSGKS.

The protein belongs to the ABC transporter superfamily. ABCD family. Peroxisomal fatty acyl CoA transporter (TC 3.A.1.203) subfamily.

Its subcellular location is the membrane. The protein is ABC transporter D family member 3 (abcD3) of Dictyostelium discoideum (Social amoeba).